A 450-amino-acid chain; its full sequence is Tripartite motif-containing protein 64C (450 aa).

Residues Cys15–Arg56 form an RING-type zinc finger. The B box-type zinc-finger motif lies at Ser87 to Ile128. Zn(2+) contacts are provided by Cys92, His95, Cys114, and His120. Residues Asp191 to Arg218 adopt a coiled-coil conformation. The B30.2/SPRY domain occupies Glu269 to Thr450.

Belongs to the TRIM/RBCC family.

The chain is Tripartite motif-containing protein 64C (TRIM64C) from Homo sapiens (Human).